The primary structure comprises 375 residues: Chlorophyll a/b light-harvesting protein PcbC (375 aa).

6 helical membrane passes run 40–60, 102–122, 151–171, 225–245, 262–282, and 300–320; these read LLGA…SITV, YFVI…GGLF, LSLI…AFVA, IIGG…WHIL, AILS…GFFV, and GAAA…VWHA. Residues 352 to 375 form a disordered region; that stretch reads ARTFIGRGKPQPEPPKKKGLFGRG.

Belongs to the PsbB/PsbC family. IsiA/Pcb subfamily. As to quaternary structure, the antenna complex consists of chlorophylls (a and b) and chlorophyll a/b binding proteins. Requires chlorophyll a as cofactor. Chlorophyll b is required as a cofactor.

The protein localises to the cellular thylakoid membrane. In terms of biological role, the antenna complex functions as a light receptor, it captures and delivers excitation energy to photosystems II and I. The Prochlorales pcb genes are not related to higher plant LHCs. This chain is Chlorophyll a/b light-harvesting protein PcbC (pcbC), found in Prochlorothrix hollandica.